The primary structure comprises 497 residues: Lysophospholipid acyltransferase 5 (497 aa).

Transmembrane regions (helical) follow at residues 31 to 51 (LLTILAGYPVAALYQKFISVI), 74 to 94 (GLDTYHSLIAILTTYFLVLLL), 100 to 120 (IFLAINFVFHMSYLLLGYFYT), 173 to 193 (LELLAFSYFPSGFLVGPQFPF), 213 to 235 (AGVRRFGAGAFYLIVCQVGLRYL), and 264 to 286 (SLYKYISCWLLTEGALICIGLTY). Residues asparagine 322 and histidine 358 contribute to the active site. A helical membrane pass occupies residues 339-361 (FLNNRTISYGAALGFLAVWHGYH). Asparagine 398 carries an N-linked (GlcNAc...) asparagine glycan. The next 2 membrane-spanning stretches (helical) occupy residues 408–428 (FITLKSYNVVYMGWCLTAFVF) and 435–455 (IVVYGAVSYYGFTFLVLWAAF). Residues 469-497 (KLAGEDQKLQDSNTDKLVEEKKPEDKKSE) form a disordered region. The span at 470–497 (LAGEDQKLQDSNTDKLVEEKKPEDKKSE) shows a compositional bias: basic and acidic residues. Serine 480 is subject to Phosphoserine.

Belongs to the membrane-bound acyltransferase family. During gastrulation, expressed mainly along the midline in the presumptive mesoderm. During germ band elongation, expressed in mesoderm and endoderm primordia and in the cephalic furrow. Expression in mesoderm and endoderm lineages continues during germ band shortening. At the end of this process, no longer detected in somatic mesoderm or endoderm layer with expression restricted to anterior and posterior domains of the visceral mesoderm.

The protein localises to the endoplasmic reticulum. It is found in the membrane. The catalysed reaction is a 1-acyl-sn-glycero-3-phospho-L-serine + an acyl-CoA = a 1,2-diacyl-sn-glycero-3-phospho-L-serine + CoA. The enzyme catalyses 1-(9Z-octadecenoyl)-sn-glycero-3-phospho-L-serine + (9Z)-hexadecenoyl-CoA = 1-(9Z-octadecenoyl)-2-(9Z-hexadecenoyl)-sn-glycero-3-phospho-L-serine + CoA. It carries out the reaction a 1-acyl-sn-glycero-3-phosphocholine + an acyl-CoA = a 1,2-diacyl-sn-glycero-3-phosphocholine + CoA. It catalyses the reaction 1-hexadecanoyl-sn-glycero-3-phosphocholine + (9Z)-octadecenoyl-CoA = 1-hexadecanoyl-2-(9Z-octadecenoyl)-sn-glycero-3-phosphocholine + CoA. The catalysed reaction is (9Z,12Z)-octadecadienoyl-CoA + 1-hexadecanoyl-sn-glycero-3-phosphocholine = 1-hexadecanoyl-2-(9Z,12Z-octadecadienoyl)-sn-glycero-3-phosphocholine + CoA. The enzyme catalyses (5Z,8Z,11Z,14Z)-eicosatetraenoyl-CoA + 1-hexadecanoyl-sn-glycero-3-phosphocholine = 1-hexadecanoyl-2-(5Z,8Z,11Z,14Z-eicosatetraenoyl)-sn-glycero-3-phosphocholine + CoA. It carries out the reaction (9Z)-hexadecenoyl-CoA + 1-hexadecanoyl-sn-glycero-3-phosphocholine = 1-hexadecanoyl-2-(9Z-hexadecenoyl)-sn-glycero-3-phosphocholine + CoA. Its pathway is lipid metabolism; phospholipid metabolism. Functionally, acyltransferase that mediates the acylation of lysophospholipids to produce phospholipids (glycerophospholipids). Highest activity with lysophosphatidylcholine (1-acyl-sn-glycero-3-phosphocholine or LPC) producing phosphatidylcholine (1,2-diacyl-sn-glycero-3-phosphocholine or PC) (LPCAT activity), but also converts lysophosphatidylserine (1-acyl-2-hydroxy-sn-glycero-3-phospho-L-serine or LPS) to phosphatidylserine (1,2-diacyl-sn-glycero-3-phospho-L-serine or PS) (LPSAT activity). Has a preference for unsaturated fatty acids of at least 16 carbons such as oleoyl-CoA ((9Z)-octadecenoyl-CoA) and palmitoleoyl-CoA ((9Z)-hexadecenoyl-CoA). Glycerophospholipids are important structural and functional components of cellular membrane, acyl-chain remodeling regulates the molecular species distribution of glycerophospholipids which can affect membrane fluidity and curvature. Essential for fertility and viability together with Oysgedart (Oys). Required for germ cells to migrate into the mesoderm. This is Lysophospholipid acyltransferase 5 from Drosophila melanogaster (Fruit fly).